Consider the following 327-residue polypeptide: Probable 6-phosphogluconolactonase 3, chloroplastic (327 aa).

Composition is skewed to low complexity over residues 1–29 (MSASAAVSSTCAAASSTTSRRSSSSPASR) and 43–66 (VASRTSPRSPVVPPVYATASPGGA). The segment at 1-66 (MSASAAVSST…VYATASPGGA (66 aa)) is disordered. Residues 1–71 (MSASAAVSST…SPGGAGGTTA (71 aa)) constitute a chloroplast transit peptide.

Belongs to the glucosamine/galactosamine-6-phosphate isomerase family. 6-phosphogluconolactonase subfamily.

Its subcellular location is the plastid. It is found in the chloroplast. It catalyses the reaction 6-phospho-D-glucono-1,5-lactone + H2O = 6-phospho-D-gluconate + H(+). It functions in the pathway carbohydrate degradation; pentose phosphate pathway; D-ribulose 5-phosphate from D-glucose 6-phosphate (oxidative stage): step 2/3. Hydrolysis of 6-phosphogluconolactone to 6-phosphogluconate. In Oryza sativa subsp. indica (Rice), this protein is Probable 6-phosphogluconolactonase 3, chloroplastic.